A 282-amino-acid polypeptide reads, in one-letter code: 2-dehydro-3-deoxyphosphooctonate aldolase (282 aa).

This sequence belongs to the KdsA family.

The protein resides in the cytoplasm. It catalyses the reaction D-arabinose 5-phosphate + phosphoenolpyruvate + H2O = 3-deoxy-alpha-D-manno-2-octulosonate-8-phosphate + phosphate. Its pathway is carbohydrate biosynthesis; 3-deoxy-D-manno-octulosonate biosynthesis; 3-deoxy-D-manno-octulosonate from D-ribulose 5-phosphate: step 2/3. It participates in bacterial outer membrane biogenesis; lipopolysaccharide biosynthesis. The chain is 2-dehydro-3-deoxyphosphooctonate aldolase from Shewanella sp. (strain MR-4).